The following is a 61-amino-acid chain: Large ribosomal subunit protein bL32 (61 aa).

The span at 1 to 16 (MAVPRRKTSPSRRGMR) shows a compositional bias: basic residues. The interval 1–61 (MAVPRRKTSP…RQVLKVKKED (61 aa)) is disordered. The segment covering 17–44 (RSADALKKPTYVEDKDSGELRRPHHLDL) has biased composition (basic and acidic residues).

The protein belongs to the bacterial ribosomal protein bL32 family.

This Afipia carboxidovorans (strain ATCC 49405 / DSM 1227 / KCTC 32145 / OM5) (Oligotropha carboxidovorans) protein is Large ribosomal subunit protein bL32.